A 162-amino-acid polypeptide reads, in one-letter code: Endoribonuclease YbeY (162 aa).

Zn(2+) contacts are provided by His128, His132, and His138.

It belongs to the endoribonuclease YbeY family. It depends on Zn(2+) as a cofactor.

Its subcellular location is the cytoplasm. In terms of biological role, single strand-specific metallo-endoribonuclease involved in late-stage 70S ribosome quality control and in maturation of the 3' terminus of the 16S rRNA. This Lactococcus lactis subsp. lactis (strain IL1403) (Streptococcus lactis) protein is Endoribonuclease YbeY.